The primary structure comprises 335 residues: MKNLILAIESSCDDSSIAIIDKNTLECKFHKKISQELEHSIYGGVVPELAARLHSEALPKILKQSKKYFKNLCAIAVTNEPGLSVSLLGGISMAKTLASALNLPLIPINHLKGHIYSLFLEEKISLDRGILLVSGGHTMVLYLKDDANLELLASTNDDSFGESFDKVAKMMNLGYPGGVIIENLAKNAKLKNISFNTPLKHSKELAFSFSGLKNAVRLEILKHENLNEDTKAEIAYAFENTACDHIMDKLEKIFNLYKFKNFGVVGGASANLNLRSRLQNLCQKYNANLKLAPLKFCSDNALMIARAAVDAYEKKEFVSIEEDILSPKNKNFSRI.

The Fe cation site is built by His110 and His114. Substrate contacts are provided by residues 132–136 (LVSGG), Asp165, Gly178, and Asn271. Asp299 provides a ligand contact to Fe cation.

It belongs to the KAE1 / TsaD family. Fe(2+) serves as cofactor.

It is found in the cytoplasm. It catalyses the reaction L-threonylcarbamoyladenylate + adenosine(37) in tRNA = N(6)-L-threonylcarbamoyladenosine(37) in tRNA + AMP + H(+). In terms of biological role, required for the formation of a threonylcarbamoyl group on adenosine at position 37 (t(6)A37) in tRNAs that read codons beginning with adenine. Is involved in the transfer of the threonylcarbamoyl moiety of threonylcarbamoyl-AMP (TC-AMP) to the N6 group of A37, together with TsaE and TsaB. TsaD likely plays a direct catalytic role in this reaction. The chain is tRNA N6-adenosine threonylcarbamoyltransferase from Campylobacter jejuni subsp. doylei (strain ATCC BAA-1458 / RM4099 / 269.97).